Consider the following 143-residue polypeptide: Large ribosomal subunit protein uL11 (143 aa).

This sequence belongs to the universal ribosomal protein uL11 family. Part of the ribosomal stalk of the 50S ribosomal subunit. Interacts with L10 and the large rRNA to form the base of the stalk. L10 forms an elongated spine to which L12 dimers bind in a sequential fashion forming a multimeric L10(L12)X complex. One or more lysine residues are methylated.

Forms part of the ribosomal stalk which helps the ribosome interact with GTP-bound translation factors. The sequence is that of Large ribosomal subunit protein uL11 from Borreliella burgdorferi (strain ATCC 35210 / DSM 4680 / CIP 102532 / B31) (Borrelia burgdorferi).